Here is an 84-residue protein sequence, read N- to C-terminus: Small ribosomal subunit protein uS17 (84 aa).

Belongs to the universal ribosomal protein uS17 family. Part of the 30S ribosomal subunit.

In terms of biological role, one of the primary rRNA binding proteins, it binds specifically to the 5'-end of 16S ribosomal RNA. This is Small ribosomal subunit protein uS17 from Sodalis glossinidius (strain morsitans).